We begin with the raw amino-acid sequence, 142 residues long: Hemoglobin subunit alpha (142 aa).

Residues 2–142 form the Globin domain; that stretch reads VLSAADKNNV…VSTVLTSKYR (141 aa). Position 4 is a phosphoserine (Ser4). Lys8 and Lys12 each carry N6-succinyllysine. Position 17 is an N6-acetyllysine; alternate (Lys17). An N6-succinyllysine; alternate modification is found at Lys17. Tyr25 carries the phosphotyrosine modification. At Ser36 the chain carries Phosphoserine. An N6-succinyllysine modification is found at Lys41. Ser50 carries the post-translational modification Phosphoserine. Residue His59 coordinates O2. His88 contacts heme b. Thr109 is subject to Phosphothreonine. A phosphoserine mark is found at Ser125 and Ser132. Phosphothreonine occurs at positions 135 and 138. At Ser139 the chain carries Phosphoserine.

This sequence belongs to the globin family. As to quaternary structure, heterotetramer of two alpha chains and two beta chains. In terms of tissue distribution, red blood cells.

Involved in oxygen transport from the lung to the various peripheral tissues. Functionally, hemopressin acts as an antagonist peptide of the cannabinoid receptor CNR1. Hemopressin-binding efficiently blocks cannabinoid receptor CNR1 and subsequent signaling. This Cavia porcellus (Guinea pig) protein is Hemoglobin subunit alpha (HBA).